The following is a 719-amino-acid chain: DNA ligase (719 aa).

NAD(+)-binding positions include 42-46 (DAAYD), 92-93 (SL), and Glu126. Lys128 functions as the N6-AMP-lysine intermediate in the catalytic mechanism. NAD(+) contacts are provided by Arg149, Glu185, Lys301, and Lys325. Residues Cys430, Cys433, Cys448, and Cys454 each contribute to the Zn(2+) site. One can recognise a BRCT domain in the interval 640–719 (ATGSPVEGKT…DDWFKLVGED (80 aa)).

It belongs to the NAD-dependent DNA ligase family. LigA subfamily. Requires Mg(2+) as cofactor. Mn(2+) serves as cofactor.

The catalysed reaction is NAD(+) + (deoxyribonucleotide)n-3'-hydroxyl + 5'-phospho-(deoxyribonucleotide)m = (deoxyribonucleotide)n+m + AMP + beta-nicotinamide D-nucleotide.. Its function is as follows. DNA ligase that catalyzes the formation of phosphodiester linkages between 5'-phosphoryl and 3'-hydroxyl groups in double-stranded DNA using NAD as a coenzyme and as the energy source for the reaction. It is essential for DNA replication and repair of damaged DNA. This is DNA ligase from Brucella melitensis biotype 1 (strain ATCC 23456 / CCUG 17765 / NCTC 10094 / 16M).